Consider the following 223-residue polypeptide: Octanoyltransferase (223 aa).

The region spanning glycine 35–arginine 214 is the BPL/LPL catalytic domain. Substrate-binding positions include arginine 74–histidine 81, alanine 145–glycine 147, and glycine 158–serine 160. Cysteine 176 acts as the Acyl-thioester intermediate in catalysis.

The protein belongs to the LipB family.

The protein resides in the cytoplasm. It carries out the reaction octanoyl-[ACP] + L-lysyl-[protein] = N(6)-octanoyl-L-lysyl-[protein] + holo-[ACP] + H(+). It participates in protein modification; protein lipoylation via endogenous pathway; protein N(6)-(lipoyl)lysine from octanoyl-[acyl-carrier-protein]: step 1/2. Its function is as follows. Catalyzes the transfer of endogenously produced octanoic acid from octanoyl-acyl-carrier-protein onto the lipoyl domains of lipoate-dependent enzymes. Lipoyl-ACP can also act as a substrate although octanoyl-ACP is likely to be the physiological substrate. This chain is Octanoyltransferase, found in Rhizorhabdus wittichii (strain DSM 6014 / CCUG 31198 / JCM 15750 / NBRC 105917 / EY 4224 / RW1) (Sphingomonas wittichii).